A 1235-amino-acid chain; its full sequence is Topoisomerase 1-associated factor 1 (1235 aa).

Disordered regions lie at residues 327 to 357, 584 to 610, 812 to 841, and 897 to 1235; these read RERKMDNSKTFRPPRRARKPEMEPKDLGPPV, GEEAEDVGVPEDNDADDSGDDEQHAER, EGAADGEAADERSNKSAPPHITIRPDTEAR, and EFSP…SDEE. Acidic residues predominate over residues 585 to 603; it reads EEAEDVGVPEDNDADDSGD. Acidic residues predominate over residues 929–947; that stretch reads DDDEEEIRGFLGDDDDEDF. Basic residues predominate over residues 964-973; that stretch reads QKKRQRKRRR. The span at 977–986 shows a compositional bias: acidic residues; sequence SGDEEDEGVS. The span at 999–1044 shows a compositional bias: basic and acidic residues; it reads EKELEKIRKIKSEMYVHASDDETDDERDREFFERERKRQETKDSKF. 2 stretches are compositionally biased toward acidic residues: residues 1070 to 1081 and 1099 to 1118; these read VLDDEPESDESE and SEEEQEEEEEEEEEEDSDEE. Basic residues predominate over residues 1124–1150; sequence AKSKTSKRKAAVPSKRPARRPGTAKKR. Over residues 1156 to 1170 the composition is skewed to acidic residues; it reads SDNDEDEDEEEDAMD. Basic and acidic residues predominate over residues 1193-1202; the sequence is LGRRIDKMAM. Residues 1203–1212 are compositionally biased toward acidic residues; sequence DDGDEDEDDQ.

It belongs to the timeless family. In terms of assembly, component of the fork protection complex (FPC) consisting of tof-1 and csm-3.

Its subcellular location is the nucleus. Forms a fork protection complex (FPC) with csm-3 and which is required for chromosome segregation during meiosis and DNA damage repair. FPC coordinates leading and lagging strand synthesis and moves with the replication fork. FPC stabilizes replication forks in a configuration that is recognized by replication checkpoint sensors. The polypeptide is Topoisomerase 1-associated factor 1 (tof-1) (Neurospora crassa (strain ATCC 24698 / 74-OR23-1A / CBS 708.71 / DSM 1257 / FGSC 987)).